The primary structure comprises 253 residues: (S)-2-haloacid dehalogenase (253 aa).

Aspartate 8 serves as the catalytic Nucleophile. An (S)-2-haloacid contacts are provided by residues 9–10, arginine 39, and 114–115; these read AY and SN. The important for catalytic activity stretch occupies residues 171 to 176; sequence SSNGFD.

The protein belongs to the HAD-like hydrolase superfamily. S-2-haloalkanoic acid dehalogenase family. In terms of assembly, homodimer.

The catalysed reaction is an (S)-2-haloacid + H2O = a (2R)-2-hydroxycarboxylate + a halide anion + H(+). The enzyme catalyses (S)-2-chloropropanoate + H2O = (R)-lactate + chloride + H(+). Catalyzes the hydrolytic dehalogenation of small (S)-2-haloalkanoic acids to yield the corresponding (R)-2-hydroxyalkanoic acids. Acts on acids of short chain lengths, C(2) to C(4), with inversion of configuration at C-2. Active with 2-halogenated carboxylic acids and converts only the S-isomer (or L-isomer) of 2-chloropropionic acid with inversion of configuration to produce R-lactate (or D-isomer). The protein is (S)-2-haloacid dehalogenase of Xanthobacter autotrophicus.